The primary structure comprises 425 residues: GTPase Obg (425 aa).

Residues 1 to 158 (MFIDKARIFV…RWITLELKMI (158 aa)) enclose the Obg domain. Positions 159–330 (ADVGLLGFPN…VIAYVSKMLK (172 aa)) constitute an OBG-type G domain. GTP-binding positions include 165 to 172 (GFPNVGKS), 190 to 194 (FTTLT), 212 to 215 (DIPG), 282 to 285 (NKFD), and 311 to 313 (SAA). Positions 172 and 192 each coordinate Mg(2+). Positions 344–425 (YRPELDIGTE…IYELEFEFYN (82 aa)) constitute an OCT domain.

Belongs to the TRAFAC class OBG-HflX-like GTPase superfamily. OBG GTPase family. In terms of assembly, monomer. The cofactor is Mg(2+).

It localises to the cytoplasm. Its function is as follows. An essential GTPase which binds GTP, GDP and possibly (p)ppGpp with moderate affinity, with high nucleotide exchange rates and a fairly low GTP hydrolysis rate. Plays a role in control of the cell cycle, stress response, ribosome biogenesis and in those bacteria that undergo differentiation, in morphogenesis control. This Clostridioides difficile (strain 630) (Peptoclostridium difficile) protein is GTPase Obg.